We begin with the raw amino-acid sequence, 386 residues long: uncharacterized protein (386 aa).

The segment at 355–386 (PSEAQKVQVKSNKKPPIAPKPEHLKKRDHGLC) is disordered. Residues 377–386 (HLKKRDHGLC) are compositionally biased toward basic residues.

This is an uncharacterized protein from Rickettsia prowazekii (strain Madrid E).